The primary structure comprises 516 residues: 4-hydroxybenzoate brominase (decarboxylating) (516 aa).

Residues Ser13, Glu32, Val40, Phe41, His51, Val102, and Gln365 each contribute to the FAD site.

This sequence belongs to the FMO family. FAD is required as a cofactor.

It catalyses the reaction 2 bromide + 4-hydroxybenzoate + 2 NADPH + 2 O2 + 5 H(+) = 2,4-dibromophenol + CO2 + 2 NADP(+) + 4 H2O. The enzyme catalyses bromide + 4-hydroxybenzoate + NADPH + O2 + 2 H(+) = 3-bromo-4-hydroxybenzoate + NADP(+) + 2 H2O. The catalysed reaction is 3-bromo-4-hydroxybenzoate + bromide + NADPH + O2 + 3 H(+) = 2,4-dibromophenol + CO2 + NADP(+) + 2 H2O. It carries out the reaction 3,4-dihydroxybenzoate + 2 bromide + 2 NADPH + 2 O2 + 5 H(+) = 3,5-dibromobenzene-1,2-diol + CO2 + 2 NADP(+) + 4 H2O. It catalyses the reaction 3,4-dihydroxybenzoate + bromide + NADPH + O2 + 2 H(+) = 3-bromo-4,5-dihydroxybenzoate + NADP(+) + 2 H2O. The enzyme catalyses 3-bromo-4,5-dihydroxybenzoate + bromide + NADPH + O2 + 3 H(+) = 3,5-dibromobenzene-1,2-diol + CO2 + NADP(+) + 2 H2O. Brominase involved in the biosynthesis of polybrominated aromatic organic compounds. Catalyzes the bromination of 4-hydroxybenzoate (4-HBA) to 3-bromo-4-hydroxybenzoate, followed by bromination and decarboxylation of 3-bromo-4-hydroxybenzoate to 2,4-dibromophenol. Can also use 3,4-dihydroxybenzoate, with lower efficiency, forming 3-bromo-4,5-dihydroxybenzoate and 3,5-dibromobenzene-1,2-diol. This chain is 4-hydroxybenzoate brominase (decarboxylating), found in Marinomonas mediterranea (strain ATCC 700492 / JCM 21426 / NBRC 103028 / MMB-1).